Reading from the N-terminus, the 165-residue chain is Phosphopantetheine adenylyltransferase (165 aa).

Residue S10 coordinates substrate. ATP is bound by residues S10–F11 and H18. 3 residues coordinate substrate: K42, L74, and R88. ATP contacts are provided by residues G89–R91, E99, and Y124–S130.

Belongs to the bacterial CoaD family. In terms of assembly, homohexamer. Requires Mg(2+) as cofactor.

It is found in the cytoplasm. It carries out the reaction (R)-4'-phosphopantetheine + ATP + H(+) = 3'-dephospho-CoA + diphosphate. Its pathway is cofactor biosynthesis; coenzyme A biosynthesis; CoA from (R)-pantothenate: step 4/5. Its function is as follows. Reversibly transfers an adenylyl group from ATP to 4'-phosphopantetheine, yielding dephospho-CoA (dPCoA) and pyrophosphate. This is Phosphopantetheine adenylyltransferase from Halalkalibacterium halodurans (strain ATCC BAA-125 / DSM 18197 / FERM 7344 / JCM 9153 / C-125) (Bacillus halodurans).